The primary structure comprises 502 residues: Mannitol 2-dehydrogenase (502 aa).

37 to 48 (IVHIGVGGFHRA) contacts NAD(+).

Belongs to the mannitol dehydrogenase family. As to quaternary structure, monomer.

It catalyses the reaction D-mannitol + NAD(+) = D-fructose + NADH + H(+). Functionally, catalyzes the NAD(H)-dependent interconversion of D-fructose and D-mannitol in the mannitol metabolic pathway. This is Mannitol 2-dehydrogenase from Emericella nidulans (strain FGSC A4 / ATCC 38163 / CBS 112.46 / NRRL 194 / M139) (Aspergillus nidulans).